The following is a 128-amino-acid chain: Ribonuclease pancreatic (128 aa).

The segment covering 1–13 (KESPAMKFERQHM) has biased composition (basic and acidic residues). Residues 1 to 26 (KESPAMKFERQHMDSGSTSSSNPTYC) form a disordered region. 2 residues coordinate substrate: Lys-7 and Arg-10. The active-site Proton acceptor is His-12. Positions 14-26 (DSGSTSSSNPTYC) are enriched in polar residues. 4 cysteine pairs are disulfide-bonded: Cys-26/Cys-84, Cys-40/Cys-95, Cys-58/Cys-110, and Cys-65/Cys-72. Asn-34 carries N-linked (GlcNAc...) asparagine glycosylation. 41–45 (KPVNT) is a substrate binding site. An N-linked (GlcNAc...) asparagine glycan is attached at Asn-62. Substrate is bound by residues Lys-66 and Arg-85. Residue His-119 is the Proton donor of the active site.

Belongs to the pancreatic ribonuclease family. In terms of assembly, monomer. Interacts with and forms tight 1:1 complexes with RNH1. Dimerization of two such complexes may occur. Interaction with RNH1 inhibits this protein. Pancreas.

The protein localises to the secreted. It catalyses the reaction an [RNA] containing cytidine + H2O = an [RNA]-3'-cytidine-3'-phosphate + a 5'-hydroxy-ribonucleotide-3'-[RNA].. It carries out the reaction an [RNA] containing uridine + H2O = an [RNA]-3'-uridine-3'-phosphate + a 5'-hydroxy-ribonucleotide-3'-[RNA].. Functionally, endonuclease that catalyzes the cleavage of RNA on the 3' side of pyrimidine nucleotides. Acts on single-stranded and double-stranded RNA. In Equus caballus (Horse), this protein is Ribonuclease pancreatic (RNASE1).